The following is a 302-amino-acid chain: Sulfate adenylyltransferase subunit 2 (302 aa).

This sequence belongs to the PAPS reductase family. CysD subfamily. Heterodimer composed of CysD, the smaller subunit, and CysN.

It catalyses the reaction sulfate + ATP + H(+) = adenosine 5'-phosphosulfate + diphosphate. It participates in sulfur metabolism; hydrogen sulfide biosynthesis; sulfite from sulfate: step 1/3. Functionally, with CysN forms the ATP sulfurylase (ATPS) that catalyzes the adenylation of sulfate producing adenosine 5'-phosphosulfate (APS) and diphosphate, the first enzymatic step in sulfur assimilation pathway. APS synthesis involves the formation of a high-energy phosphoric-sulfuric acid anhydride bond driven by GTP hydrolysis by CysN coupled to ATP hydrolysis by CysD. The protein is Sulfate adenylyltransferase subunit 2 of Yersinia enterocolitica serotype O:8 / biotype 1B (strain NCTC 13174 / 8081).